Reading from the N-terminus, the 233-residue chain is Lactate utilization protein C (233 aa).

This sequence belongs to the LutC/YkgG family.

In terms of biological role, is involved in L-lactate degradation and allows cells to grow with lactate as the sole carbon source. This is Lactate utilization protein C from Oceanobacillus iheyensis (strain DSM 14371 / CIP 107618 / JCM 11309 / KCTC 3954 / HTE831).